The following is a 118-amino-acid chain: Small ribosomal subunit protein uS13 (118 aa).

Positions 94–118 are disordered; sequence GLPLRGQRTRTNARTRKGPRKAIRK.

This sequence belongs to the universal ribosomal protein uS13 family. In terms of assembly, part of the 30S ribosomal subunit. Forms a loose heterodimer with protein S19. Forms two bridges to the 50S subunit in the 70S ribosome.

In terms of biological role, located at the top of the head of the 30S subunit, it contacts several helices of the 16S rRNA. In the 70S ribosome it contacts the 23S rRNA (bridge B1a) and protein L5 of the 50S subunit (bridge B1b), connecting the 2 subunits; these bridges are implicated in subunit movement. Contacts the tRNAs in the A and P-sites. The chain is Small ribosomal subunit protein uS13 from Xanthomonas axonopodis pv. citri (strain 306).